The primary structure comprises 137 residues: Nucleoside diphosphate kinase (137 aa).

K9, F57, R85, T91, R102, and N112 together coordinate ATP. H115 acts as the Pros-phosphohistidine intermediate in catalysis.

It belongs to the NDK family. Homotetramer. Requires Mg(2+) as cofactor.

It is found in the cytoplasm. The enzyme catalyses a 2'-deoxyribonucleoside 5'-diphosphate + ATP = a 2'-deoxyribonucleoside 5'-triphosphate + ADP. It carries out the reaction a ribonucleoside 5'-diphosphate + ATP = a ribonucleoside 5'-triphosphate + ADP. Functionally, major role in the synthesis of nucleoside triphosphates other than ATP. The ATP gamma phosphate is transferred to the NDP beta phosphate via a ping-pong mechanism, using a phosphorylated active-site intermediate. The protein is Nucleoside diphosphate kinase of Leptospira interrogans serogroup Icterohaemorrhagiae serovar Lai (strain 56601).